The following is a 671-amino-acid chain: DNA ligase (671 aa).

NAD(+) is bound by residues 32–36 (DAEYD), 81–82 (SL), and Glu-113. Residue Lys-115 is the N6-AMP-lysine intermediate of the active site. The NAD(+) site is built by Arg-136, Glu-173, Lys-290, and Lys-314. The Zn(2+) site is built by Cys-408, Cys-411, Cys-426, and Cys-432. The region spanning 593 to 671 (EIDSPFAGKT…EAEMLRLFGE (79 aa)) is the BRCT domain.

Belongs to the NAD-dependent DNA ligase family. LigA subfamily. The cofactor is Mg(2+). It depends on Mn(2+) as a cofactor.

It carries out the reaction NAD(+) + (deoxyribonucleotide)n-3'-hydroxyl + 5'-phospho-(deoxyribonucleotide)m = (deoxyribonucleotide)n+m + AMP + beta-nicotinamide D-nucleotide.. In terms of biological role, DNA ligase that catalyzes the formation of phosphodiester linkages between 5'-phosphoryl and 3'-hydroxyl groups in double-stranded DNA using NAD as a coenzyme and as the energy source for the reaction. It is essential for DNA replication and repair of damaged DNA. This chain is DNA ligase, found in Enterobacter sp. (strain 638).